Consider the following 129-residue polypeptide: uncharacterized protein (129 aa).

A helical transmembrane segment spans residues 77 to 97 (ILAVFIISFIIVVVGVLLLGL). Residues 109–129 (SSNDKKLQSNDEEKQALAEKA) are disordered. Over residues 111-129 (NDKKLQSNDEEKQALAEKA) the composition is skewed to basic and acidic residues.

It localises to the vacuole membrane. This is an uncharacterized protein from Saccharomyces cerevisiae (strain ATCC 204508 / S288c) (Baker's yeast).